The primary structure comprises 169 residues: Putative prolyl-tRNA synthetase associated domain-containing protein 1 (169 aa).

This sequence belongs to the PRORSD1 family.

This is Putative prolyl-tRNA synthetase associated domain-containing protein 1 (PRORSD1P) from Homo sapiens (Human).